Consider the following 235-residue polypeptide: dITP/XTP pyrophosphatase (235 aa).

Ser7–Lys12 is a binding site for substrate. The active-site Proton acceptor is Asp70. Asp70 contributes to the Mg(2+) binding site. Residues Ser71, Phe180 to Asp183, Lys211, and His216 to Arg217 each bind substrate.

The protein belongs to the HAM1 NTPase family. Homodimer. The cofactor is Mg(2+).

The enzyme catalyses XTP + H2O = XMP + diphosphate + H(+). It carries out the reaction dITP + H2O = dIMP + diphosphate + H(+). It catalyses the reaction ITP + H2O = IMP + diphosphate + H(+). Functionally, pyrophosphatase that catalyzes the hydrolysis of nucleoside triphosphates to their monophosphate derivatives, with a high preference for the non-canonical purine nucleotides XTP (xanthosine triphosphate), dITP (deoxyinosine triphosphate) and ITP. Seems to function as a house-cleaning enzyme that removes non-canonical purine nucleotides from the nucleotide pool, thus preventing their incorporation into DNA/RNA and avoiding chromosomal lesions. This Anaeromyxobacter dehalogenans (strain 2CP-C) protein is dITP/XTP pyrophosphatase.